A 367-amino-acid polypeptide reads, in one-letter code: Peroxisome biogenesis protein 16 (367 aa).

The segment at 135–173 (GGETPNEEKDSNQSESQNRAGNSGRNLGPHGLGNQNHHN) is disordered. A compositionally biased stretch (polar residues) spans 147-159 (QSESQNRAGNSGR). The next 2 membrane-spanning stretches (helical) occupy residues 237–257 (ALFA…VLFI) and 264–284 (SWIP…LLAN).

Belongs to the peroxin-16 family. In terms of assembly, interacts with APEM9 (via both N- and C-terminus). In terms of processing, the detection of an additional immunorelated polypeptide of 52 kDa suggests a post-translational modification of PEX16. Expressed in roots, siliques, seeds, cotyledons, leaves and flowers. Low expression in leaves and roots.

The protein resides in the peroxisome membrane. Its subcellular location is the endoplasmic reticulum membrane. Functionally, involved in the formation of peroxisomes, lipid bodies and protein bodies. In Arabidopsis thaliana (Mouse-ear cress), this protein is Peroxisome biogenesis protein 16.